A 105-amino-acid polypeptide reads, in one-letter code: Protein FAM24A (105 aa).

The N-terminal stretch at 1-32 is a signal peptide; the sequence is MAKMFDLRTKIMIGIGSSLLVAAMVLLSVVFC.

This sequence belongs to the FAM24 family.

The protein resides in the secreted. This chain is Protein FAM24A (FAM24A), found in Homo sapiens (Human).